The primary structure comprises 343 residues: Type II restriction enzyme BsuMI component YdiS (343 aa).

BsuMI restriction activity requires YdiR, YdiS and YdjA.

The catalysed reaction is Endonucleolytic cleavage of DNA to give specific double-stranded fragments with terminal 5'-phosphates.. Its function is as follows. A P subtype restriction enzyme that recognizes the double-stranded sequence 5'-CTCGAG-3'; the cleavage site is unknown. This is Type II restriction enzyme BsuMI component YdiS (ydiS) from Bacillus subtilis (strain 168).